The following is a 930-amino-acid chain: G patch domain-containing protein TGH (930 aa).

Lys25 participates in a covalent cross-link: Glycyl lysine isopeptide (Lys-Gly) (interchain with G-Cter in ubiquitin). Residues Gly76 to Asp152 are disordered. The region spanning Ser159–Tyr199 is the G-patch domain. One copy of the SURP motif repeat lies at Leu405–Ala447. Disordered stretches follow at residues Ala478–Gln508, Arg687–Ala751, and Phe773–Asp930. Over residues Pro489–Asp498 the composition is skewed to basic and acidic residues. The span at Thr499–Gln508 shows a compositional bias: polar residues. Positions Ile701–Glu711 are enriched in acidic residues. Over residues Glu779 to Thr808 the composition is skewed to basic and acidic residues. A compositionally biased stretch (basic residues) spans Arg848–Arg857. Over residues His858 to Gly877 the composition is skewed to basic and acidic residues. The span at Arg892 to Ser908 shows a compositional bias: basic residues. Positions Ser913–Arg923 are enriched in basic and acidic residues.

In terms of tissue distribution, expressed in vasculature of cotyledons and leaves, young meristematic tissues, trichomes and pistils.

The protein resides in the nucleus speckle. It is found in the nucleus. The protein localises to the nucleoplasm. In terms of biological role, functions as a component of microRNA (miRNA) and small interfering RNA (siRNA) biogenesis. May assist DCL1 and DCL4 to efficiently process and/or recruit the precursors of miRNAs and siRNAs. In the miRNA biogenesis pathway, associates with the DCL1 complex that processes primary miRNAs (pri-miRNAs) into miRNAs. Binds pri-miRNAs and precursor miRNAs (pre-miRNAs). Is required for the interaction between pri-miRNAs and DRB1. Required for general proper plant growth and, in particular, initiation of vascular development. Interacts genetically with AMP1, a glutamate carboxypeptidase involved in the regulation of meristem function. This is G patch domain-containing protein TGH from Arabidopsis thaliana (Mouse-ear cress).